Consider the following 344-residue polypeptide: Sensor histidine kinase GraS (344 aa).

Transmembrane regions (helical) follow at residues 18–38 (IFWI…DYDI) and 43–63 (IGFI…FTFL). Residues 126 to 332 (EFVHDIKTPV…TFVLTFPKQN (207 aa)) form the Histidine kinase domain. Histidine 129 is subject to Phosphohistidine; by autocatalysis.

In terms of processing, autophosphorylated.

The protein localises to the cell membrane. It catalyses the reaction ATP + protein L-histidine = ADP + protein N-phospho-L-histidine.. In terms of biological role, member of the two-component regulatory system GraR/GraS involved in resistance against cationic antimicrobial peptides (CAMPs). GraS probably functions as a sensor protein kinase which is autophosphorylated at a histidine residue and transfers its phosphate group to GraR. The polypeptide is Sensor histidine kinase GraS (graS) (Staphylococcus haemolyticus (strain JCSC1435)).